A 312-amino-acid chain; its full sequence is Malate dehydrogenase (312 aa).

Residues 7 to 13 and Asp-34 each bind NAD(+); that span reads GAAGGIG. Substrate is bound by residues Arg-81 and Arg-87. NAD(+) is bound by residues Asn-94 and 117–119; that span reads ITN. Substrate is bound by residues Asn-119 and Arg-153. His-177 (proton acceptor) is an active-site residue. Residue Met-227 coordinates NAD(+).

Belongs to the LDH/MDH superfamily. MDH type 1 family. In terms of assembly, homodimer.

The catalysed reaction is (S)-malate + NAD(+) = oxaloacetate + NADH + H(+). Functionally, catalyzes the reversible oxidation of malate to oxaloacetate. This is Malate dehydrogenase from Salmonella arizonae (strain ATCC BAA-731 / CDC346-86 / RSK2980).